The chain runs to 598 residues: MFS siderochrome iron transporter D (598 aa).

Residues 1 to 34 (MLSSWQKKFFQTPEHPPAEGIAPPRDDGVPNPEP) are disordered. Over 1-76 (MLSSWQKKFF…AEAITLTWSK (76 aa)) the chain is Cytoplasmic. Residues 77-97 (ISLGAAYFLMWLLYLVNGFQA) form a helical membrane-spanning segment. At 98-115 (SITGNLSAYVTSGFESHS) the chain is on the extracellular side. A glycan (N-linked (GlcNAc...) asparagine) is linked at Asn102. The helical transmembrane segment at 116–136 (LIPVISIVSSVMSAATYMPLA) threads the bilayer. The Cytoplasmic segment spans residues 137–144 (KVLNLWDR). Residues 145–165 (SIGFIIMVAFATLGLILSATC) form a helical membrane-spanning segment. Residues 166-171 (HDIGTY) are Extracellular-facing. Residues 172–192 (CAAQVFYSIGFAGIIFSVDVI) form a helical membrane-spanning segment. At 193–203 (TADTSTLRDRG) the chain is on the cytoplasmic side. A helical membrane pass occupies residues 204 to 224 (LAYAFTSSPYIITAFGGPAAA). Residues 225–233 (EHFYDSNWR) are Extracellular-facing. A helical transmembrane segment spans residues 234-254 (WAYGCFSIVLPVVALPMFCLL). Topologically, residues 255–289 (RWNRHKAKKSGLLKDKADSGRTWMESIRHYIIEFD) are cytoplasmic. A helical transmembrane segment spans residues 290–310 (ILGVFFLAAGLVLFLLPFSIA). Over 311 to 318 (GSTEDDWK) the chain is Extracellular. Residues 319-339 (SASIITMLVIGFVCLLVFALV) traverse the membrane as a helical segment. The Cytoplasmic portion of the chain corresponds to 340-341 (ER). A helical transmembrane segment spans residues 342 to 362 (FVAPVPFLPWALLASRTVLGA). Topologically, residues 363 to 396 (CMLDVCYQIAYYCWFNYYTSYLQVVYGTSITTAG) are extracellular. A helical membrane pass occupies residues 397 to 417 (YITSIFDVVSGVWLFIVGFLI). The Cytoplasmic segment spans residues 418–424 (KKTNRFR). The helical transmembrane segment at 425–445 (WLLFIAVPLYILGVGLMIYFR) threads the bilayer. Residues 446-450 (KPSWS) are Extracellular-facing. The helical transmembrane segment at 451–471 (VGYMIMCQIFIAFAGGTMIIC) threads the bilayer. Residues 472 to 490 (QQVAVLAASDHDHAASSLA) are Cytoplasmic-facing. A helical transmembrane segment spans residues 491 to 511 (FLNVFGTMGSAVGSSISGAIW). At 512-562 (THTLPGALQRLLPDSVKADWQTIYDSLEEQLSYERGTLIRQAIALAYASTQ) the chain is on the extracellular side. A helical transmembrane segment spans residues 563–583 (SKMLIAGTAIMALSLVWMFVI). Residues 584-598 (RDIKLTKTQTKGVLF) are Cytoplasmic-facing.

This sequence belongs to the major facilitator superfamily.

Its subcellular location is the cell membrane. Its function is as follows. Major facilitator transporter involved in fusarinine C (FsC) uptake. In contrast to TAFC-mediated iron uptake, FsC-mediated iron uptake via mirD does not play a significant role during infection. This is MFS siderochrome iron transporter D from Aspergillus fumigatus (strain ATCC MYA-4609 / CBS 101355 / FGSC A1100 / Af293) (Neosartorya fumigata).